The chain runs to 557 residues: Aerobic glycerol-3-phosphate dehydrogenase (557 aa).

21–49 lines the FAD pocket; the sequence is DVVIVGGGITGAGIALDASNRGMKVALVE.

It belongs to the FAD-dependent glycerol-3-phosphate dehydrogenase family. It depends on FAD as a cofactor.

It localises to the cytoplasm. It catalyses the reaction a quinone + sn-glycerol 3-phosphate = dihydroxyacetone phosphate + a quinol. It participates in polyol metabolism; glycerol degradation via glycerol kinase pathway; glycerone phosphate from sn-glycerol 3-phosphate (aerobic route): step 1/1. This Staphylococcus epidermidis (strain ATCC 35984 / DSM 28319 / BCRC 17069 / CCUG 31568 / BM 3577 / RP62A) protein is Aerobic glycerol-3-phosphate dehydrogenase (glpD).